We begin with the raw amino-acid sequence, 103 residues long: Small ribosomal subunit protein uS10 (103 aa).

It belongs to the universal ribosomal protein uS10 family. Part of the 30S ribosomal subunit.

Functionally, involved in the binding of tRNA to the ribosomes. This chain is Small ribosomal subunit protein uS10, found in Acidovorax sp. (strain JS42).